The chain runs to 607 residues: 2-isopropylmalate synthase (607 aa).

Polar residues predominate over residues M1 to Q10. The segment at M1 to R40 is disordered. The Pyruvate carboxyltransferase domain occupies P75–D349. Residues D84, H288, H290, and N324 each coordinate Mg(2+). Residues P491–R607 form a regulatory domain region.

The protein belongs to the alpha-IPM synthase/homocitrate synthase family. LeuA type 2 subfamily. Homodimer. Mg(2+) is required as a cofactor.

The protein resides in the cytoplasm. It carries out the reaction 3-methyl-2-oxobutanoate + acetyl-CoA + H2O = (2S)-2-isopropylmalate + CoA + H(+). It functions in the pathway amino-acid biosynthesis; L-leucine biosynthesis; L-leucine from 3-methyl-2-oxobutanoate: step 1/4. Catalyzes the condensation of the acetyl group of acetyl-CoA with 3-methyl-2-oxobutanoate (2-ketoisovalerate) to form 3-carboxy-3-hydroxy-4-methylpentanoate (2-isopropylmalate). The polypeptide is 2-isopropylmalate synthase (Mycobacterium leprae (strain TN)).